We begin with the raw amino-acid sequence, 598 residues long: Dihydroxy-acid dehydratase astD, mitochondrial (598 aa).

A mitochondrion-targeting transit peptide spans 1–111 (MFASRIRSRA…HRAGLVPMRF (111 aa)). Residues 23–50 (RLPASTTGRRYKSDETLNRVSSKITQPK) are disordered. The span at 40–50 (NRVSSKITQPK) shows a compositional bias: polar residues. Position 86 (Cys86) interacts with [2Fe-2S] cluster. Asp118 is a binding site for Mg(2+). A [2Fe-2S] cluster-binding site is contributed by Cys159. Asp160 lines the Mg(2+) pocket. Cys232 serves as a coordination point for [2Fe-2S] cluster. Residue Glu485 coordinates Mg(2+). Ser511 (proton acceptor) is an active-site residue.

The protein belongs to the IlvD/Edd family. Requires [2Fe-2S] cluster as cofactor. Mg(2+) is required as a cofactor.

It is found in the mitochondrion. It carries out the reaction (2R)-2,3-dihydroxy-3-methylbutanoate = 3-methyl-2-oxobutanoate + H2O. It catalyses the reaction (2R,3R)-2,3-dihydroxy-3-methylpentanoate = (S)-3-methyl-2-oxopentanoate + H2O. It participates in amino-acid biosynthesis; L-isoleucine biosynthesis; L-isoleucine from 2-oxobutanoate: step 3/4. Its pathway is amino-acid biosynthesis; L-valine biosynthesis; L-valine from pyruvate: step 3/4. With respect to regulation, DHAD activity is not inhibited by the dihydroxyacid dehydratase inhibitor aspterric acid (AA). Its function is as follows. Dihydroxyacid dehydratase; part of the gene cluster that mediates the biosynthesis of the sesquiterpenoid aspterric acid (AA), an inhibitor of dihydroxy-acid dehydratase (DHAD) effective as an herbicide. Performs the third step in the common pathway leading to biosynthesis of branched-chain amino acids. Catalyzes the dehydration of (2R,3R)-2,3-dihydroxy-3-methylpentanoate (2,3-dihydroxy-3-methylvalerate) into 2-oxo-3-methylpentanoate (2-oxo-3-methylvalerate) and of (2R)-2,3-dihydroxy-3-methylbutanoate (2,3-dihydroxyisovalerate) into 2-oxo-3-methylbutanoate (2-oxoisovalerate), the penultimate precursor to L-isoleucine and L-valine, respectively. AstD confers self-resistance in the presence of the dihydroxyacid dehydratase inhibitor aspterric acid (AA) produced by the ast cluster. This is Dihydroxy-acid dehydratase astD, mitochondrial from Aspergillus terreus (strain NIH 2624 / FGSC A1156).